A 382-amino-acid polypeptide reads, in one-letter code: PPE family protein PPE44 (382 aa).

It belongs to the mycobacterial PPE family.

The protein resides in the secreted. Its subcellular location is the cell wall. It localises to the cell surface. Functionally, virulence factor that modulates host innate immune response. In Mycobacterium tuberculosis (strain CDC 1551 / Oshkosh), this protein is PPE family protein PPE44.